The primary structure comprises 319 residues: MSLNFLDFEQPIAELEAKIDSLTAVSRQDEKLDINIDEEVHRLREKSVELTRKIFADLGAWQVAQLARHPKRPYTLDYVRLAFDEFDELAGDRAYADDKAIVGGIARLEGRPVMIIGHQKGRETKEKIRRNFGMPAPEGYRKALRLMEMAERFNMPIITFIDTPGAYPGVGAEERGQSEAIARNLREMSRLNVPVICTVIGEGGSGGALAIGVGDKVNMLQYSTYSVISPEGCASILWKSADKAPLAAEAMGIIAPRLKELKLIDSIIPEPLGGAHRNPEAMAASLKAQLLEDLADLDVLSTDDLKNRRYQRLMSYGYA.

One can recognise a CoA carboxyltransferase C-terminal domain in the interval 35 to 296; sequence NIDEEVHRLR…KAQLLEDLAD (262 aa).

It belongs to the AccA family. As to quaternary structure, acetyl-CoA carboxylase is a heterohexamer composed of biotin carboxyl carrier protein (AccB), biotin carboxylase (AccC) and two subunits each of ACCase subunit alpha (AccA) and ACCase subunit beta (AccD).

The protein resides in the cytoplasm. The enzyme catalyses N(6)-carboxybiotinyl-L-lysyl-[protein] + acetyl-CoA = N(6)-biotinyl-L-lysyl-[protein] + malonyl-CoA. Its pathway is lipid metabolism; malonyl-CoA biosynthesis; malonyl-CoA from acetyl-CoA: step 1/1. Its function is as follows. Component of the acetyl coenzyme A carboxylase (ACC) complex. First, biotin carboxylase catalyzes the carboxylation of biotin on its carrier protein (BCCP) and then the CO(2) group is transferred by the carboxyltransferase to acetyl-CoA to form malonyl-CoA. This chain is Acetyl-coenzyme A carboxylase carboxyl transferase subunit alpha, found in Salmonella paratyphi C (strain RKS4594).